A 601-amino-acid polypeptide reads, in one-letter code: Group B oligopeptidase PepB (601 aa).

Zn(2+) is bound at residue H386. E387 is an active-site residue. Zn(2+) is bound by residues H390 and H393.

Belongs to the peptidase M3B family. It depends on Zn(2+) as a cofactor.

It is found in the cytoplasm. Has oligopeptidase activity and degrades a variety of small bioactive peptides, including bradykinin, neurotensin, and peptide fragments of substance P and adrenocorticotropin. Also hydrolyzes the synthetic collagen-like substrate N-(3-[2-furyl]acryloyl)-Leu-Gly-Pro-Ala (FALGPA). The chain is Group B oligopeptidase PepB (pepB) from Streptococcus agalactiae serotype III (strain NEM316).